The chain runs to 375 residues: Chaperone protein DnaJ (375 aa).

The J domain maps to 5–70; that stretch reads DYYEILGISK…EKRAAYDQYG (66 aa). A CR-type zinc finger spans residues 130 to 208; the sequence is GIIKEICIPT…CHGNGRVERS (79 aa). Zn(2+) contacts are provided by Cys-143, Cys-146, Cys-160, Cys-163, Cys-182, Cys-185, Cys-196, and Cys-199. CXXCXGXG motif repeat units lie at residues 143–150, 160–167, 182–189, and 196–203; these read CEKCRGTG, CMTCHGQG, CPTCHGHG, and CNKCHGNG.

This sequence belongs to the DnaJ family. As to quaternary structure, homodimer. The cofactor is Zn(2+).

Its subcellular location is the cytoplasm. Functionally, participates actively in the response to hyperosmotic and heat shock by preventing the aggregation of stress-denatured proteins and by disaggregating proteins, also in an autonomous, DnaK-independent fashion. Unfolded proteins bind initially to DnaJ; upon interaction with the DnaJ-bound protein, DnaK hydrolyzes its bound ATP, resulting in the formation of a stable complex. GrpE releases ADP from DnaK; ATP binding to DnaK triggers the release of the substrate protein, thus completing the reaction cycle. Several rounds of ATP-dependent interactions between DnaJ, DnaK and GrpE are required for fully efficient folding. Also involved, together with DnaK and GrpE, in the DNA replication of plasmids through activation of initiation proteins. This is Chaperone protein DnaJ from Blochmanniella pennsylvanica (strain BPEN).